The sequence spans 1922 residues: Endoribonuclease Dicer (1922 aa).

The region spanning Leu-51–Glu-227 is the Helicase ATP-binding domain. An ATP-binding site is contributed by Leu-64 to Thr-71. The DECH box motif lies at Asp-175 to His-178. The segment at Asp-256–Asp-595 is required for interaction with PRKRA and TARBP2. Residues Tyr-409–Asn-433 form a disordered region. A phosphoserine mark is found at Ser-413 and Ser-415. A compositionally biased stretch (acidic residues) spans Asp-414–Glu-425. The Helicase C-terminal domain occupies Asn-433–Asp-602. Residues Ala-630–Tyr-722 enclose the Dicer dsRNA-binding fold domain. Residues Lys-895 to Pro-1042 form the PAZ domain. A phosphoserine mark is found at Ser-1016 and Ser-1160. The RNase III 1 domain occupies Asp-1276–Thr-1403. The Mg(2+) site is built by Glu-1316, Asp-1395, and Glu-1398. Residues Ser-1460, Ser-1468, and Ser-1470 each carry the phosphoserine modification. An RNase III 2 domain is found at Phe-1666–Gly-1824. Mg(2+)-binding residues include Glu-1705, Asp-1810, and Glu-1813. The DRBM domain occupies Val-1849 to Ala-1914. Residue Ser-1868 is modified to Phosphoserine.

Belongs to the helicase family. Dicer subfamily. As to quaternary structure, component of the RISC loading complex (RLC), or micro-RNA (miRNA) loading complex (miRLC), which is composed of DICER1, AGO2 and TARBP2; DICER1 and TARBP2 are required to process precursor miRNAs (pre-miRNAs) to mature miRNAs and then load them onto AGO2. Note that the trimeric RLC/miRLC is also referred to as RISC. Interacts with DHX9, AGO1, PIWIL1 and PRKRA. Associates with the 60S ribosome. Interacts with BCDIN3D. Interacts with AGO2, TARBP2, EIF6, MOV10 and RPL7A (60S ribosome subunit); they form a large RNA-induced silencing complex (RISC). Interacts (via Dicer dsRNA-binding fold domain) with ALOX5 (via PLAT domain); this interaction enhances arachidonate 5-lipoxygenase activity and modifies the miRNA precursor processing activity of DICER1. In terms of assembly, (Microbial infection) Interacts with ebolavirus transcriptional activator VP30; this interaction prevents TARBP2/TRBP binding to DICER1 and thus allows the virus to counteract host RNA silencing. (Microbial infection) Interacts with ebolavirus transcriptional activator VP35; this interaction prevents TARBP2/TRBP binding to DICER1 and thus allows the virus to counteract host RNA silencing. Mg(2+) serves as cofactor. The cofactor is Mn(2+).

The protein resides in the cytoplasm. The protein localises to the perinuclear region. The enzyme catalyses Endonucleolytic cleavage to 5'-phosphomonoester.. Double-stranded RNA (dsRNA) endoribonuclease playing a central role in short dsRNA-mediated post-transcriptional gene silencing. Cleaves naturally occurring long dsRNAs and short hairpin pre-microRNAs (miRNA) into fragments of twenty-one to twenty-three nucleotides with 3' overhang of two nucleotides, producing respectively short interfering RNAs (siRNA) and mature microRNAs. SiRNAs and miRNAs serve as guide to direct the RNA-induced silencing complex (RISC) to complementary RNAs to degrade them or prevent their translation. Gene silencing mediated by siRNAs, also called RNA interference, controls the elimination of transcripts from mobile and repetitive DNA elements of the genome but also the degradation of exogenous RNA of viral origin for instance. The miRNA pathway on the other side is a mean to specifically regulate the expression of target genes. The sequence is that of Endoribonuclease Dicer (DICER1) from Homo sapiens (Human).